Reading from the N-terminus, the 567-residue chain is 25S rRNA (cytosine-C(5))-methyltransferase NSUN5 (567 aa).

Positions 1–17 are enriched in basic residues; it reads MVARRNKPKAPLVKHRF. The segment at 1 to 88 is disordered; that stretch reads MVARRNKPKA…KTPPATKQKF (88 aa). Residues 312 to 318, Glu336, Asp363, and Asp383 contribute to the S-adenosyl-L-methionine site; that span reads CSAPGNK. Cys444 functions as the Nucleophile in the catalytic mechanism.

This sequence belongs to the class I-like SAM-binding methyltransferase superfamily. RsmB/NOP family.

It carries out the reaction a cytidine in 25S rRNA + S-adenosyl-L-methionine = a 5-methylcytidine in 25S rRNA + S-adenosyl-L-homocysteine + H(+). Functionally, S-adenosyl-L-methionine-dependent methyltransferase that specifically methylates the C(5) position of cytosine 2268 (m5C2268) in 25S rRNA. This is 25S rRNA (cytosine-C(5))-methyltransferase NSUN5 from Arabidopsis thaliana (Mouse-ear cress).